The primary structure comprises 146 residues: Ribonuclease VapC41 (146 aa).

Positions 3 to 142 constitute a PINc domain; sequence LCDTNIWLAL…FTQYGGIELR (140 aa). The Mg(2+) site is built by Asp-5 and Asp-112.

Belongs to the PINc/VapC protein family. Mg(2+) serves as cofactor.

Toxic component of a type II toxin-antitoxin (TA) system. An RNase. Its toxic effect is neutralized by coexpression with cognate antitoxin VapB41. The chain is Ribonuclease VapC41 from Mycobacterium tuberculosis (strain CDC 1551 / Oshkosh).